The chain runs to 380 residues: Flagellar P-ring protein (380 aa).

The N-terminal stretch at Met1–Ala35 is a signal peptide.

It belongs to the FlgI family. In terms of assembly, the basal body constitutes a major portion of the flagellar organelle and consists of four rings (L,P,S, and M) mounted on a central rod.

The protein localises to the periplasm. Its subcellular location is the bacterial flagellum basal body. Its function is as follows. Assembles around the rod to form the L-ring and probably protects the motor/basal body from shearing forces during rotation. The sequence is that of Flagellar P-ring protein from Gluconobacter oxydans (strain 621H) (Gluconobacter suboxydans).